The sequence spans 162 residues: MSETTSLEDLKGAMEGTSASADANAVPAVQKLDKFGRAYATGKRKNAVARVWIKPGSGRVKINGRDLEVYFARPVLRMILNQPLVVAAREKQYDITATVVGGGLSGQAGAIRHGISRALTYFEPSLRGVLKKEGFLTRDSRVVERKKYGKAKARRSFQFSKR.

Belongs to the universal ribosomal protein uS9 family.

The sequence is that of Small ribosomal subunit protein uS9 from Parvibaculum lavamentivorans (strain DS-1 / DSM 13023 / NCIMB 13966).